The sequence spans 131 residues: Large ribosomal subunit protein uL22c (131 aa).

It belongs to the universal ribosomal protein uL22 family. Part of the 50S ribosomal subunit.

Its subcellular location is the plastid. Functionally, this protein binds specifically to 23S rRNA. The globular domain of the protein is located near the polypeptide exit tunnel on the outside of the subunit, while an extended beta-hairpin is found that lines the wall of the exit tunnel in the center of the 70S ribosome. This Aneura mirabilis (Parasitic liverwort) protein is Large ribosomal subunit protein uL22c (rpl22).